A 233-amino-acid chain; its full sequence is Large ribosomal subunit protein uL1 (233 aa).

This sequence belongs to the universal ribosomal protein uL1 family. In terms of assembly, part of the 50S ribosomal subunit.

Functionally, binds directly to 23S rRNA. The L1 stalk is quite mobile in the ribosome, and is involved in E site tRNA release. Its function is as follows. Protein L1 is also a translational repressor protein, it controls the translation of the L11 operon by binding to its mRNA. The sequence is that of Large ribosomal subunit protein uL1 from Shewanella sediminis (strain HAW-EB3).